Consider the following 324-residue polypeptide: Acetyl-coenzyme A carboxylase carboxyl transferase subunit alpha (324 aa).

The CoA carboxyltransferase C-terminal domain occupies 42–296; the sequence is RLSELEEEVY…EKALTRLAEK (255 aa).

The protein belongs to the AccA family. Acetyl-CoA carboxylase is a heterohexamer composed of biotin carboxyl carrier protein (AccB), biotin carboxylase (AccC) and two subunits each of ACCase subunit alpha (AccA) and ACCase subunit beta (AccD).

It localises to the cytoplasm. It carries out the reaction N(6)-carboxybiotinyl-L-lysyl-[protein] + acetyl-CoA = N(6)-biotinyl-L-lysyl-[protein] + malonyl-CoA. The protein operates within lipid metabolism; malonyl-CoA biosynthesis; malonyl-CoA from acetyl-CoA: step 1/1. Component of the acetyl coenzyme A carboxylase (ACC) complex. First, biotin carboxylase catalyzes the carboxylation of biotin on its carrier protein (BCCP) and then the CO(2) group is transferred by the carboxyltransferase to acetyl-CoA to form malonyl-CoA. This Shouchella clausii (strain KSM-K16) (Alkalihalobacillus clausii) protein is Acetyl-coenzyme A carboxylase carboxyl transferase subunit alpha.